We begin with the raw amino-acid sequence, 225 residues long: Uracil-DNA glycosylase (225 aa).

Asp65 acts as the Proton acceptor in catalysis.

The protein belongs to the uracil-DNA glycosylase (UDG) superfamily. UNG family.

It is found in the cytoplasm. The catalysed reaction is Hydrolyzes single-stranded DNA or mismatched double-stranded DNA and polynucleotides, releasing free uracil.. In terms of biological role, excises uracil residues from the DNA which can arise as a result of misincorporation of dUMP residues by DNA polymerase or due to deamination of cytosine. The protein is Uracil-DNA glycosylase of Bacillus cytotoxicus (strain DSM 22905 / CIP 110041 / 391-98 / NVH 391-98).